The following is a 103-amino-acid chain: Co-chaperonin GroES (103 aa).

This sequence belongs to the GroES chaperonin family. In terms of assembly, heptamer of 7 subunits arranged in a ring. Interacts with the chaperonin GroEL.

It localises to the cytoplasm. Functionally, together with the chaperonin GroEL, plays an essential role in assisting protein folding. The GroEL-GroES system forms a nano-cage that allows encapsulation of the non-native substrate proteins and provides a physical environment optimized to promote and accelerate protein folding. GroES binds to the apical surface of the GroEL ring, thereby capping the opening of the GroEL channel. This chain is Co-chaperonin GroES, found in Synechocystis sp. (strain ATCC 27184 / PCC 6803 / Kazusa).